A 550-amino-acid chain; its full sequence is Hydroxylamine reductase (550 aa).

4 residues coordinate [2Fe-2S] cluster: cysteine 3, cysteine 6, cysteine 18, and cysteine 25. Residues histidine 249, glutamate 273, cysteine 317, cysteine 405, cysteine 433, cysteine 458, glutamate 492, and lysine 494 each contribute to the hybrid [4Fe-2O-2S] cluster site. Residue cysteine 405 is modified to Cysteine persulfide.

Belongs to the HCP family. The cofactor is [2Fe-2S] cluster. Hybrid [4Fe-2O-2S] cluster is required as a cofactor.

Its subcellular location is the cytoplasm. It catalyses the reaction A + NH4(+) + H2O = hydroxylamine + AH2 + H(+). Its function is as follows. Catalyzes the reduction of hydroxylamine to form NH(3) and H(2)O. The sequence is that of Hydroxylamine reductase from Salmonella agona (strain SL483).